The chain runs to 558 residues: Serine palmitoyltransferase 2 (558 aa).

Residues 33–42 (HDDDEEEEEV) are compositionally biased toward acidic residues. The interval 33 to 57 (HDDDEEEEEVKVDQGSEETTSSHDI) is disordered. An N6-(pyridoxal phosphate)lysine modification is found at Lys-384.

Belongs to the class-II pyridoxal-phosphate-dependent aminotransferase family. In terms of assembly, heterodimer of sptl-1/sptl-2. Requires pyridoxal 5'-phosphate as cofactor.

It catalyses the reaction L-serine + hexadecanoyl-CoA + H(+) = 3-oxosphinganine + CO2 + CoA. It participates in lipid metabolism; sphingolipid metabolism. Its function is as follows. Component of the serine palmitoyltransferase (SPT) that catalyzes the first committed step in sphingolipid biosynthesis, which is the condensation of an acyl-CoA species and L-serine. The catalytic core is composed of a heterodimer of sptl-1 and sptl-2 or sptl-1 and sptl-3. Required for the specification of abicobasal polarity and development of the gut lumen. This Caenorhabditis elegans protein is Serine palmitoyltransferase 2 (sptl-2).